The sequence spans 301 residues: UDP-3-O-acyl-N-acetylglucosamine deacetylase (301 aa).

H81, H237, and D241 together coordinate Zn(2+). The active-site Proton donor is H264.

The protein belongs to the LpxC family. It depends on Zn(2+) as a cofactor.

It carries out the reaction a UDP-3-O-[(3R)-3-hydroxyacyl]-N-acetyl-alpha-D-glucosamine + H2O = a UDP-3-O-[(3R)-3-hydroxyacyl]-alpha-D-glucosamine + acetate. Its pathway is glycolipid biosynthesis; lipid IV(A) biosynthesis; lipid IV(A) from (3R)-3-hydroxytetradecanoyl-[acyl-carrier-protein] and UDP-N-acetyl-alpha-D-glucosamine: step 2/6. Functionally, catalyzes the hydrolysis of UDP-3-O-myristoyl-N-acetylglucosamine to form UDP-3-O-myristoylglucosamine and acetate, the committed step in lipid A biosynthesis. The sequence is that of UDP-3-O-acyl-N-acetylglucosamine deacetylase from Leptospira borgpetersenii serovar Hardjo-bovis (strain JB197).